Here is a 1386-residue protein sequence, read N- to C-terminus: Lysophospholipase NTE1 (1386 aa).

Residues 1–19 are Cytoplasmic-facing; it reads MGPEFEDSIPLVHSDNRTT. Residues 20–40 form a helical membrane-spanning segment; it reads TIYSVYIIISDIFSFVQWLLF. At 41–65 the chain is on the lumenal side; the sequence is KVLNLIIIDSPAFVLRLLSKNFEIN. The chain crosses the membrane as a helical span at residues 66 to 86; sequence LHLSSILATLIGVSVVTYLVI. Residues 87 to 1386 are Cytoplasmic-facing; that stretch reads RYKFLTGYSH…KKILYRRNSI (1300 aa). The segment at 394–416 is disordered; the sequence is EAEAENLPKKLKHHHRNQLQRTT. Positions 402–411 are enriched in basic residues; sequence KKLKHHHRNQ. Residues 577-701 and 697-821 each bind a nucleoside 3',5'-cyclic phosphate; these read KRLL…LKNL and KLKN…VASK. Residues 1081 to 1245 enclose the PNPLA domain; that stretch reads LVLGGGGSRG…LDNLPVNEMK (165 aa). The short motif at 1085-1090 is the GXGXXG element; the sequence is GGGSRG. The short motif at 1112 to 1116 is the GXSXG element; that stretch reads GTSIG. S1114 functions as the Nucleophile in the catalytic mechanism. The Proton acceptor role is filled by D1232. The short motif at 1232–1234 is the DGA/G element; it reads DGG.

It belongs to the NTE family.

It is found in the endoplasmic reticulum membrane. The catalysed reaction is a 1-acyl-sn-glycero-3-phosphocholine + H2O = sn-glycerol 3-phosphocholine + a fatty acid + H(+). Inhibited by organophosphorus esters. Functionally, intracellular phospholipase B that catalyzes the double deacylation of phosphatidylcholine (PC) to glycerophosphocholine (GroPCho). Plays an important role in membrane lipid homeostasis. Responsible for the rapid PC turnover in response to inositol, elevated temperatures, or when choline is present in the growth medium. The sequence is that of Lysophospholipase NTE1 (NTE1) from Candida albicans (strain SC5314 / ATCC MYA-2876) (Yeast).